The primary structure comprises 284 residues: TM2 domain-containing protein almondex (284 aa).

A signal peptide spans 1 to 32; sequence MRLQRQCIVVNMRSAIVLIMIFVLTGIRNSET. The interval 33–63 is disordered; it reads ASGGNQMDLSDSKGDHKDNSNASNGNGNAND. Residues 33-225 lie on the Extracellular side of the membrane; that stretch reads ASGGNQMDLS…NWTQGYRWST (193 aa). Residues 42-51 are compositionally biased toward basic and acidic residues; that stretch reads SDSKGDHKDN. Over residues 52 to 63 the composition is skewed to low complexity; the sequence is SNASNGNGNAND. 6 N-linked (GlcNAc...) asparagine glycosylation sites follow: N53, N89, N141, N194, N206, and N216. The 48-residue stretch at 220 to 267 folds into the TM2 domain; it reads GYRWSTALLISLTLGGFGADRFYLGHWQEGIGKLFSFGGLGVWTIIDV. A helical transmembrane segment spans residues 226–246; the sequence is ALLISLTLGGFGADRFYLGHW. At 247–249 the chain is on the cytoplasmic side; sequence QEG. Residues 250-270 traverse the membrane as a helical segment; it reads IGKLFSFGGLGVWTIIDVLLI. The Extracellular segment spans residues 271–284; that stretch reads SMHYLGPADGSLYI.

The protein belongs to the TM2 family. Expressed in female ovary, mainly in nurse cells (at protein level). Expressed in the brain at low levels (at protein level).

It localises to the membrane. The protein resides in the vesicle. Functionally, positive regulator of Notch signaling during lateral inhibition and boundary formation. Interacts with Notch signaling at the membrane, at the level of gamma-secretase-mediated S3 cleavage. May regulate Notch signaling by regulating the subcellular localization of N/Notch in a context dependent manner. Maternal neurogenic factor involved in Notch signaling-dependent mesectodermal and neuroectodermal specification during early embryogenesis. Functions cooperatively with bisc/TM2D1 and amrt/TM2D2. Required for maintenance of neuronal function. Involved in imaginal specification of eyes and wings. In Drosophila melanogaster (Fruit fly), this protein is TM2 domain-containing protein almondex.